Consider the following 95-residue polypeptide: uncharacterized protein (95 aa).

3 helical membrane passes run 3 to 23 (YTVL…GFSF), 35 to 55 (ILFL…MMLT), and 63 to 83 (MLGV…VMII).

The protein localises to the cell membrane. This is an uncharacterized protein from Mycoplasma pneumoniae (strain ATCC 29342 / M129 / Subtype 1) (Mycoplasmoides pneumoniae).